The chain runs to 160 residues: Nucleotide-binding protein MADE_1020535 (160 aa).

This sequence belongs to the YajQ family.

Nucleotide-binding protein. This chain is Nucleotide-binding protein MADE_1020535, found in Alteromonas mediterranea (strain DSM 17117 / CIP 110805 / LMG 28347 / Deep ecotype).